Consider the following 565-residue polypeptide: DNA primase (565 aa).

The segment at 37-61 adopts a CHC2-type zinc-finger fold; the sequence is CPFHSETNPSFYVHPGLKIYHCFGC. The 82-residue stretch at 248 to 329 folds into the Toprim domain; that stretch reads GFFVITEGYF…NVLVATPSPY (82 aa). Residues Glu-254, Asp-298, and Asp-300 each coordinate Mg(2+).

This sequence belongs to the DnaG primase family. Monomer. Interacts with DnaB. Zn(2+) is required as a cofactor. The cofactor is Mg(2+).

The enzyme catalyses ssDNA + n NTP = ssDNA/pppN(pN)n-1 hybrid + (n-1) diphosphate.. Its function is as follows. RNA polymerase that catalyzes the synthesis of short RNA molecules used as primers for DNA polymerase during DNA replication. This Thermotoga maritima (strain ATCC 43589 / DSM 3109 / JCM 10099 / NBRC 100826 / MSB8) protein is DNA primase.